Here is a 285-residue protein sequence, read N- to C-terminus: Protein pxr1 (285 aa).

Positions 1–11 (MGLAAPRKKIK) are enriched in basic residues. The interval 1 to 23 (MGLAAPRKKIKISHDPNNTNWSR) is disordered. The 55-residue stretch at 25–79 (TSGFGHKILSSQGWTPGSFLGARNAAHAEMFTAASASHIKVVLKDDTLGLGARPK) folds into the G-patch domain. The interval 144–263 (TPIVTEEPQG…MGRHVFRGRH (120 aa)) is disordered. Residues 152–163 (QGIHKDKQEDKL) show a composition bias toward basic and acidic residues. Residues 190-208 (KKKKSKSKNHREKKDRKRK) show a composition bias toward basic residues. Positions 224–234 (RSTEKKSKATR) are enriched in basic and acidic residues. Residues 254–263 (MGRHVFRGRH) show a composition bias toward basic residues.

It belongs to the PINX1 family.

The protein resides in the nucleus. It localises to the nucleolus. Its function is as follows. Involved in rRNA-processing at A0, A1 and A2 sites and negatively regulates telomerase. The chain is Protein pxr1 (pxr1) from Aspergillus niger (strain ATCC MYA-4892 / CBS 513.88 / FGSC A1513).